The primary structure comprises 355 residues: UDP-N-acetylglucosamine--N-acetylmuramyl-(pentapeptide) pyrophosphoryl-undecaprenol N-acetylglucosamine transferase (355 aa).

UDP-N-acetyl-alpha-D-glucosamine-binding positions include 15-17 (TGG), asparagine 127, arginine 163, serine 191, isoleucine 244, 263-268 (ALTVSE), and glutamine 288.

Belongs to the glycosyltransferase 28 family. MurG subfamily.

The protein localises to the cell inner membrane. It catalyses the reaction di-trans,octa-cis-undecaprenyl diphospho-N-acetyl-alpha-D-muramoyl-L-alanyl-D-glutamyl-meso-2,6-diaminopimeloyl-D-alanyl-D-alanine + UDP-N-acetyl-alpha-D-glucosamine = di-trans,octa-cis-undecaprenyl diphospho-[N-acetyl-alpha-D-glucosaminyl-(1-&gt;4)]-N-acetyl-alpha-D-muramoyl-L-alanyl-D-glutamyl-meso-2,6-diaminopimeloyl-D-alanyl-D-alanine + UDP + H(+). It participates in cell wall biogenesis; peptidoglycan biosynthesis. Functionally, cell wall formation. Catalyzes the transfer of a GlcNAc subunit on undecaprenyl-pyrophosphoryl-MurNAc-pentapeptide (lipid intermediate I) to form undecaprenyl-pyrophosphoryl-MurNAc-(pentapeptide)GlcNAc (lipid intermediate II). This Shigella boydii serotype 18 (strain CDC 3083-94 / BS512) protein is UDP-N-acetylglucosamine--N-acetylmuramyl-(pentapeptide) pyrophosphoryl-undecaprenol N-acetylglucosamine transferase.